The sequence spans 198 residues: NAD(P)H dehydrogenase (quinone) (198 aa).

The Flavodoxin-like domain occupies 6–190 (ILVLYYSRHG…LCRALGKRLA (185 aa)). FMN-binding positions include 12–17 (SRHGAT), 79–81 (TRF), 114–120 (STASLHG), and His-135.

This sequence belongs to the WrbA family. In terms of assembly, homodimer. FMN serves as cofactor.

The enzyme catalyses a quinone + NADH + H(+) = a quinol + NAD(+). It carries out the reaction a quinone + NADPH + H(+) = a quinol + NADP(+). This Pseudomonas aeruginosa (strain ATCC 15692 / DSM 22644 / CIP 104116 / JCM 14847 / LMG 12228 / 1C / PRS 101 / PAO1) protein is NAD(P)H dehydrogenase (quinone).